The sequence spans 160 residues: Biogenesis of lysosome-related organelles complex 1 subunit 5 (160 aa).

This sequence belongs to the BLOC1S5 family. In terms of assembly, component of the biogenesis of lysosome-related organelles complex-1 (BLOC-1) composed of Blos1, Blos2, Blos3, Blos4, Dysb, Muted, Pldn and Snapin.

Component of the biogenesis of lysosome-related organelles complex-1 (BLOC-1) involved in pigment granule biogenesis. The protein is Biogenesis of lysosome-related organelles complex 1 subunit 5 of Drosophila melanogaster (Fruit fly).